The chain runs to 388 residues: Sex-determination protein fem-3 (388 aa).

Repeat copies occupy residues 7–10, 110–113, 141–144, 234–237, 284–287, and 371–374.

Component of a complex containing fem-1, fem-2 and fem-3. Interacts with fem-1 and fem-2 (via N-terminus). Part of a E3 ubiquitin-protein ligase complex, at least composed of cul-2, elc-1, tra-1, fem-1, fem-2 and fem-3; mediates the ubiquitination and subsequent proteasomal degradation of tra-1. Interacts with tra-1. Interacts with sel-10. Interacts with tra-2.

Required for male development. In XO (male) animals, fem-3 directs male differentiation in all tissues. In XX (hermaphrodite) animals, it specifies the first 80 or so germ cells to be sperm. Negatively regulates male development when bound to tra-2. Together with fem-2 associates with the CBC(fem-1) E3 ubiquitin-protein ligase complex which mediates the ubiquitination and subsequent proteasomal degradation of tra-1. This Caenorhabditis elegans protein is Sex-determination protein fem-3 (fem-3).